The chain runs to 331 residues: UPF0324 membrane protein YdhF (331 aa).

8 helical membrane passes run 2-20, 24-46, 82-104, 114-136, 148-170, 204-226, 247-269, and 308-330; these read SILP…SYLL, IFHS…NLYF, LGFS…VLFM, VSAL…VEPV, IAMV…TWMF, TLAT…YFGF, SFLP…IHFV, and LIYG…SLLI.

This sequence belongs to the UPF0324 family.

The protein resides in the cell membrane. This is UPF0324 membrane protein YdhF (ydhF) from Lactococcus lactis subsp. lactis (strain IL1403) (Streptococcus lactis).